We begin with the raw amino-acid sequence, 214 residues long: Large ribosomal subunit protein uL3 (214 aa).

A disordered region spans residues 133–153; it reads GRATHGNSRSHNVPGSIGMAQ. Q153 bears the N5-methylglutamine mark.

This sequence belongs to the universal ribosomal protein uL3 family. In terms of assembly, part of the 50S ribosomal subunit. Forms a cluster with proteins L14 and L19. Methylated by PrmB.

In terms of biological role, one of the primary rRNA binding proteins, it binds directly near the 3'-end of the 23S rRNA, where it nucleates assembly of the 50S subunit. This chain is Large ribosomal subunit protein uL3, found in Cupriavidus metallidurans (strain ATCC 43123 / DSM 2839 / NBRC 102507 / CH34) (Ralstonia metallidurans).